The following is a 162-amino-acid chain: Ribosome maturation factor RimP (162 aa).

The protein belongs to the RimP family.

It localises to the cytoplasm. Required for maturation of 30S ribosomal subunits. This chain is Ribosome maturation factor RimP, found in Cupriavidus metallidurans (strain ATCC 43123 / DSM 2839 / NBRC 102507 / CH34) (Ralstonia metallidurans).